Consider the following 259-residue polypeptide: UDP-2,3-diacylglucosamine hydrolase (259 aa).

Mn(2+) contacts are provided by aspartate 8, histidine 10, aspartate 41, asparagine 79, and histidine 114. Position 79–80 (79–80 (NR)) interacts with substrate. Substrate is bound by residues aspartate 122, serine 160, asparagine 164, lysine 167, and histidine 195. The Mn(2+) site is built by histidine 195 and histidine 197.

This sequence belongs to the LpxH family. The cofactor is Mn(2+).

Its subcellular location is the cell inner membrane. It catalyses the reaction UDP-2-N,3-O-bis[(3R)-3-hydroxytetradecanoyl]-alpha-D-glucosamine + H2O = 2-N,3-O-bis[(3R)-3-hydroxytetradecanoyl]-alpha-D-glucosaminyl 1-phosphate + UMP + 2 H(+). The protein operates within glycolipid biosynthesis; lipid IV(A) biosynthesis; lipid IV(A) from (3R)-3-hydroxytetradecanoyl-[acyl-carrier-protein] and UDP-N-acetyl-alpha-D-glucosamine: step 4/6. Functionally, hydrolyzes the pyrophosphate bond of UDP-2,3-diacylglucosamine to yield 2,3-diacylglucosamine 1-phosphate (lipid X) and UMP by catalyzing the attack of water at the alpha-P atom. Involved in the biosynthesis of lipid A, a phosphorylated glycolipid that anchors the lipopolysaccharide to the outer membrane of the cell. The chain is UDP-2,3-diacylglucosamine hydrolase from Edwardsiella ictaluri (strain 93-146).